A 274-amino-acid chain; its full sequence is ATP synthase subunit a (274 aa).

Helical transmembrane passes span 40–60, 110–130, 149–169, 224–244, and 245–265; these read FWVCNFDSIFLSIFLGLVILI, IFVWIFLMNLMDLIPIDLVPF, DVNITISMSLVVFLLIIFYSI, IFILISGLLPWWLQWILSVPW, and AIFHILIISLQSFIFMVLTIV.

It belongs to the ATPase A chain family. As to quaternary structure, F-type ATPases have 2 components, CF(1) - the catalytic core - and CF(0) - the membrane proton channel. CF(1) has five subunits: alpha(3), beta(3), gamma(1), delta(1), epsilon(1). CF(0) has three main subunits: a(1), b(2) and c(9-12). The alpha and beta chains form an alternating ring which encloses part of the gamma chain. CF(1) is attached to CF(0) by a central stalk formed by the gamma and epsilon chains, while a peripheral stalk is formed by the delta and b chains.

It localises to the cell membrane. Functionally, key component of the proton channel; it plays a direct role in the translocation of protons across the membrane. The protein is ATP synthase subunit a of Buchnera aphidicola subsp. Baizongia pistaciae (strain Bp).